The primary structure comprises 211 residues: Shikimate kinase (211 aa).

The tract at residues 1–22 is disordered; the sequence is MHFRYNYRMQRSKTPNTKNSDT. Residues 12–22 show a composition bias toward polar residues; sequence SKTPNTKNSDT. 36-41 serves as a coordination point for ATP; sequence GSGKTT. Residue Thr40 participates in Mg(2+) binding. Residues Asp58, Arg82, and Gly104 each contribute to the substrate site. Arg142 is a binding site for ATP. A substrate-binding site is contributed by Arg161. Position 178 (Gln178) interacts with ATP.

It belongs to the shikimate kinase family. Monomer. Mg(2+) is required as a cofactor.

Its subcellular location is the cytoplasm. The enzyme catalyses shikimate + ATP = 3-phosphoshikimate + ADP + H(+). It participates in metabolic intermediate biosynthesis; chorismate biosynthesis; chorismate from D-erythrose 4-phosphate and phosphoenolpyruvate: step 5/7. In terms of biological role, catalyzes the specific phosphorylation of the 3-hydroxyl group of shikimic acid using ATP as a cosubstrate. This Nitrosomonas europaea (strain ATCC 19718 / CIP 103999 / KCTC 2705 / NBRC 14298) protein is Shikimate kinase.